We begin with the raw amino-acid sequence, 379 residues long: Galactose-1-phosphate uridylyltransferase (379 aa).

The interval 1 to 21 (MSRSGTDPQQRQQASEADAAA) is disordered. Residues 9–21 (QQRQQASEADAAA) are compositionally biased toward low complexity. Cys75 contributes to the Zn(2+) binding site. UDP-alpha-D-glucose contacts are provided by residues Ala81, 97 to 98 (ND), and Asn173. Zn(2+) is bound at residue His184. His186 acts as the Tele-UMP-histidine intermediate in catalysis. Residue Gln188 participates in UDP-alpha-D-glucose binding. Residues Glu202, His301, His319, and His321 each coordinate Zn(2+). UDP-alpha-D-glucose-binding positions include 334–337 (KFMV) and 339–340 (YE).

Belongs to the galactose-1-phosphate uridylyltransferase type 1 family. In terms of assembly, homodimer. Requires Zn(2+) as cofactor.

It carries out the reaction alpha-D-galactose 1-phosphate + UDP-alpha-D-glucose = alpha-D-glucose 1-phosphate + UDP-alpha-D-galactose. It participates in carbohydrate metabolism; galactose metabolism. Its function is as follows. Plays an important role in galactose metabolism. The chain is Galactose-1-phosphate uridylyltransferase (GALT) from Homo sapiens (Human).